The sequence spans 472 residues: PEP-dependent dihydroxyacetone kinase, phosphoryl donor subunit DhaM (472 aa).

The PTS EIIA type-4 domain maps to 1 to 135 (MVNLVIVSHS…NALEAKRVQL (135 aa)). The active-site Tele-phosphohistidine intermediate is the His9. An HPr domain is found at 156–243 (ARSVSVVIQN…ALAAENFGEP (88 aa)). The active-site Pros-phosphohistidine intermediate is the His170. The interval 266–472 (PQPQDRISRE…DIPGKRVIRG (207 aa)) is PTS EI-like, N-terminal part. His432 acts as the Tele-phosphohistidine intermediate in catalysis.

Belongs to the PEP-utilizing enzyme family. Homodimer. The dihydroxyacetone kinase complex is composed of a homodimer of DhaM, a homodimer of DhaK and the subunit DhaL.

It carries out the reaction dihydroxyacetone + phosphoenolpyruvate = dihydroxyacetone phosphate + pyruvate. Functionally, component of the dihydroxyacetone kinase complex, which is responsible for the phosphoenolpyruvate (PEP)-dependent phosphorylation of dihydroxyacetone. DhaM serves as the phosphoryl donor. Is phosphorylated by phosphoenolpyruvate in an EI- and HPr-dependent reaction, and a phosphorelay system on histidine residues finally leads to phosphoryl transfer to DhaL and dihydroxyacetone. The polypeptide is PEP-dependent dihydroxyacetone kinase, phosphoryl donor subunit DhaM (Klebsiella michiganensis (strain ATCC 8724 / DSM 4798 / JCM 20051 / NBRC 3318 / NRRL B-199 / KCTC 1686 / BUCSAV 143 / CCM 1901)).